The following is a 362-amino-acid chain: MAHLKNLPWELIEEILSRVPPKSLVRFRTVSKQWNALFDDKTFINNHKMTFRFILATKSKIYSVSIDPVIVVRELPLGIPGLESLELNNLVDCNELLVCVKNNGAVVWNPWLGQSRWIQPSLNHSPMVFDGIVYDNKKYKMVAFSGLWKIYDFSSDVWIDHKSKSTNSNTNVINVQTAVCLNGNLYWVCFREKTDPLCYHIHKFGFSNSIWVRFCNLPFGRNHDGDALVLGVFRGDRFSLLKQCMVTKKIEVFVTENKINHENGDDVVWKNFMTFSSPNLPDLVETVKFSNPSYFIEGKRLVVCSRDNTGHAWIYILGDSKLISKTRIECVVDPWPLHCTFVPSLVPVPAPCRREEQAELQV.

Residues 1–47 (MAHLKNLPWELIEEILSRVPPKSLVRFRTVSKQWNALFDDKTFINNH) form the F-box domain.

This is F-box protein At2g14710 from Arabidopsis thaliana (Mouse-ear cress).